Here is a 589-residue protein sequence, read N- to C-terminus: Complement component C8 beta chain (589 aa).

Residues 1–31 form the signal peptide; sequence MKIGAQVWRALAKSCLLCATLGCLHFPGSRG. The propeptide occupies 32–53; it reads GKPDFFETKAVNGSLVKSRPVR. N43 carries an N-linked (GlcNAc...) asparagine glycan. The 54-residue stretch at 63 to 116 folds into the TSP type-1 1 domain; that stretch reads DCELSTWSSWTACDPCQKKRYRHTYLLRPSQFYGELCDLSDKEVEDCVTNQPCR. 7 disulfides stabilise this stretch: C64/C99, C75/C109, C78/C115, C121/C132, C126/C145, C139/C154, and C161/C199. 2 C-linked (Man) tryptophan glycosylation sites follow: W69 and W72. The region spanning 120 to 155 is the LDL-receptor class A domain; the sequence is RCEGFVCAQTGRCVNRRLLCNGDNDCGDQSDEANCR. 6 residues coordinate Ca(2+): L137, N140, D142, D144, D150, and E151. The region spanning 157–503 is the MACPF domain; that stretch reads IYKNCQREME…EFQSEVSSCR (347 aa). 8 beta stranded membrane-spanning segments follow: residues 201–206, 209–213, 251–258, 261–268, 328–335, 338–343, 378–385, and 391–398; these read PHYILD, FRKPY, FNFTSGFK, GVMDLGIK, SYGEYRDL, DFGTHF, AGGSFGIG, and VYVKVGVS. A disulfide bridge links C377 with C402. An EGF-like domain is found at 404 to 534; sequence DIMKEINERN…PGGFQGTACE (131 aa). Position 417 is a phosphothreonine (T417). Cystine bridges form between C502/C549, C504/C520, C507/C522, and C524/C533. In terms of domain architecture, TSP type-1 2 spans 544–587; sequence DGKWSCWSDWSACSGGHKTRHRQCNNPAPHKGGSPCSGPASETL. C-linked (Man) tryptophan glycans are attached at residues W550 and W553. C556 and C589 are joined by a disulfide. Residues 570-589 form a disordered region; it reads PAPHKGGSPCSGPASETLNC.

The protein belongs to the complement C6/C7/C8/C9 family. In terms of assembly, heterotrimer of 3 chains: alpha (C8A), beta (C8B) and gamma (C8G); the alpha and gamma chains are disulfide bonded. Component of the membrane attack complex (MAC), composed of complement C5b, C6, C7, C8A, C8B, C8G and multiple copies of the pore-forming subunit C9. N-glycosylated; contains one or two bound glycans. Not O-glycosylated.

Its subcellular location is the secreted. It is found in the target cell membrane. Its activity is regulated as follows. Membrane attack complex (MAC) assembly is inhibited by CD59, thereby protecting self-cells from damage during complement activation. CD59 acts by binding to the beta-haipins of C8 (C8A and C8B), forming an intermolecular beta-sheet that prevents incorporation of the multiple copies of C9 required for complete formation of the osmolytic pore. MAC assembly is also inhibited by clusterin (CLU) chaperones that inhibit polymerization of C9. Component of the membrane attack complex (MAC), a multiprotein complex activated by the complement cascade, which inserts into a target cell membrane and forms a pore, leading to target cell membrane rupture and cell lysis. The MAC is initiated by proteolytic cleavage of C5 into complement C5b in response to the classical, alternative, lectin and GZMK complement pathways. The complement pathways consist in a cascade of proteins that leads to phagocytosis and breakdown of pathogens and signaling that strengthens the adaptive immune system. C8B, together with C8A and C8G, inserts into the target membrane, but does not form pores by itself. During MAC assembly, associates with C5b, C6 and C7 to form the C5b8 intermediate complex that inserts into the target membrane and traverses the bilayer increasing membrane rigidity. The sequence is that of Complement component C8 beta chain (C8b) from Mus musculus (Mouse).